The primary structure comprises 348 residues: Oxygen-dependent coproporphyrinogen-III oxidase (348 aa).

Serine 104 contacts substrate. A divalent metal cation-binding residues include histidine 108 and histidine 118. Histidine 118 (proton donor) is an active-site residue. 120-122 (NYR) contacts substrate. Histidine 152 and histidine 182 together coordinate a divalent metal cation. The important for dimerization stretch occupies residues 272-307 (YAEFNLVWDRGTIFGLQTNGRTESILMSLPPLARWE).

The protein belongs to the aerobic coproporphyrinogen-III oxidase family. Homodimer. It depends on a divalent metal cation as a cofactor.

The protein localises to the cytoplasm. The enzyme catalyses coproporphyrinogen III + O2 + 2 H(+) = protoporphyrinogen IX + 2 CO2 + 2 H2O. It functions in the pathway porphyrin-containing compound metabolism; protoporphyrin-IX biosynthesis; protoporphyrinogen-IX from coproporphyrinogen-III (O2 route): step 1/1. Its function is as follows. Involved in the heme and chlorophyll biosynthesis. Catalyzes the aerobic oxidative decarboxylation of propionate groups of rings A and B of coproporphyrinogen-III to yield the vinyl groups in protoporphyrinogen-IX. The sequence is that of Oxygen-dependent coproporphyrinogen-III oxidase from Prochlorococcus marinus (strain NATL1A).